A 370-amino-acid chain; its full sequence is N-acetyltaurine hydrolase (370 aa).

Positions 26, 28, 189, 221, 250, and 318 each coordinate a divalent metal cation.

It belongs to the metallo-dependent hydrolases superfamily. Phosphotriesterase family. The cofactor is a divalent metal cation.

The protein resides in the cytoplasm. It is found in the cytosol. The catalysed reaction is N-acetyltaurine + H2O = taurine + acetate. Its function is as follows. N-acetyltaurine hydrolase catalyzes the hydrolysis of N-acetyltaurine into taurine and acetate. This chain is N-acetyltaurine hydrolase (pter), found in Dictyostelium discoideum (Social amoeba).